A 405-amino-acid polypeptide reads, in one-letter code: Dynactin subunit 2 (405 aa).

A disordered region spans residues 1–25 (MADPKYADLPGIARNEPDVYETSDL). N-acetylalanine is present on A2. Y6 carries the post-translational modification Phosphotyrosine. Position 85 is a phosphoserine (S85). Position 88 is a phosphotyrosine (Y88). Residues 105–132 (YQRLLHEVQELTTEVEKIKMTVKESATE) are a coiled coil. At T136 the chain carries Phosphothreonine. A disordered region spans residues 187 to 207 (KNTKGAGSGGKTTSGSPPDSS). Position 324 is a phosphoserine (S324).

This sequence belongs to the dynactin subunit 2 family. Subunit of dynactin, a multiprotein complex part of a tripartite complex with dynein and a adapter, such as BICDL1, BICD2 or HOOK3. The dynactin complex is built around ACTR1A/ACTB filament and consists of an actin-related filament composed of a shoulder domain, a pointed end and a barbed end. Its length is defined by its flexible shoulder domain. The soulder is composed of 2 DCTN1 subunits, 4 DCTN2 and 2 DCTN3. The 4 DCNT2 (via N-terminus) bind the ACTR1A filament and act as molecular rulers to determine the length. The pointed end is important for binding dynein-dynactin cargo adapters and consists of 4 subunits: ACTR10, DCNT4, DCTN5 and DCTN6. The barbed end is composed of a CAPZA1:CAPZB heterodimers, which binds ACTR1A/ACTB filament and dynactin and stabilizes dynactin. Interacts with BICD2 and CEP135. Interacts with DYNAP. Interacts with ECPAS. Interacts with MAPRE1.

It localises to the cytoplasm. It is found in the cytoskeleton. The protein localises to the microtubule organizing center. The protein resides in the centrosome. Its subcellular location is the membrane. Its function is as follows. Part of the dynactin complex that activates the molecular motor dynein for ultra-processive transport along microtubules. In the dynactin soulder domain, binds the ACTR1A filament and acts as a molecular ruler to determine the length. Modulates cytoplasmic dynein binding to an organelle, and plays a role in prometaphase chromosome alignment and spindle organization during mitosis. Involved in anchoring microtubules to centrosomes. May play a role in synapse formation during brain development. This chain is Dynactin subunit 2 (DCTN2), found in Sus scrofa (Pig).